The following is a 332-amino-acid chain: Protein pelota homolog (332 aa).

It belongs to the eukaryotic release factor 1 family. Pelota subfamily. In terms of assembly, monomer. A divalent metal cation serves as cofactor.

It localises to the cytoplasm. Functionally, may function in recognizing stalled ribosomes, interact with stem-loop structures in stalled mRNA molecules, and effect endonucleolytic cleavage of the mRNA. May play a role in the release non-functional ribosomes and degradation of damaged mRNAs. Has endoribonuclease activity. This Pyrobaculum calidifontis (strain DSM 21063 / JCM 11548 / VA1) protein is Protein pelota homolog.